Here is a 217-residue protein sequence, read N- to C-terminus: N-(5'-phosphoribosyl)anthranilate isomerase (217 aa).

Belongs to the TrpF family.

The catalysed reaction is N-(5-phospho-beta-D-ribosyl)anthranilate = 1-(2-carboxyphenylamino)-1-deoxy-D-ribulose 5-phosphate. The protein operates within amino-acid biosynthesis; L-tryptophan biosynthesis; L-tryptophan from chorismate: step 3/5. The chain is N-(5'-phosphoribosyl)anthranilate isomerase from Acaryochloris marina (strain MBIC 11017).